The chain runs to 458 residues: Vasoactive intestinal polypeptide receptor 1 (458 aa).

The first 31 residues, 1–31, serve as a signal peptide directing secretion; that stretch reads MRPLSPPPAGWFCVLAGVLACVLGPVGSWAV. Residues 32 to 142 are Extracellular-facing; the sequence is GLQQEECDYL…DEQQTVFYNS (111 aa). 5 disulfide bridges follow: cysteine 38–cysteine 209, cysteine 51–cysteine 73, cysteine 64–cysteine 106, cysteine 87–cysteine 123, and cysteine 216–cysteine 286. Asparagine 59, asparagine 70, asparagine 101, and asparagine 105 each carry an N-linked (GlcNAc...) asparagine glycan. A helical transmembrane segment spans residues 143 to 167; the sequence is VKTGYTIGYSLSLAALLVATAILSL. Residues 168–175 lie on the Cytoplasmic side of the membrane; sequence FRKLHCTR. Residues 176 to 197 form a helical membrane-spanning segment; that stretch reads NYIHMHLFISFILRATAVFIKD. Over 198–217 the chain is Extracellular; the sequence is LALFDSEESDHCSKGSVGCK. A helical transmembrane segment spans residues 218–242; it reads AAVVLFQYCVMANFFWLLVEGLYLH. At 243–255 the chain is on the cytoplasmic side; the sequence is TLLAVSFFSERKY. Residues 256 to 277 form a helical membrane-spanning segment; the sequence is FWGYIFVGWGVPSTFIMVWTVV. Over 278–292 the chain is Extracellular; the sequence is RIHFEDYGCWDTIHS. The helical transmembrane segment at 293-317 threads the bilayer; sequence SLWWIIKAPILASILVNFILFIRII. Topologically, residues 318-339 are cytoplasmic; the sequence is GILVQKLRPPDVGKSDNSPYSR. A helical transmembrane segment spans residues 340-360; sequence LAKSTLLLIPLFGVHYIMFAF. Over 361–368 the chain is Extracellular; it reads FPDNFKAE. Residues 369-392 form a helical membrane-spanning segment; the sequence is VKMVFELIVGSFQGCVVAILYCFL. The Cytoplasmic portion of the chain corresponds to 393–458; sequence NGEVQAELRR…SSFQAEVSLV (66 aa).

Belongs to the G-protein coupled receptor 2 family. Interacts with ADCYAP1/PACAP; activated by both PACAP27 and PACAP38 neuropeptides. Interacts with VIP; the interaction results in VIPR1 activation.

It is found in the cell membrane. Its function is as follows. G protein-coupled receptor activated by the neuropeptides vasoactive intestinal peptide (VIP) and pituitary adenylate cyclase-activating polypeptide (ADCYAP1/PACAP). Binds VIP and both PACAP27 and PACAP38 bioactive peptides with the following order of ligand affinity VIP = PACAP27 &gt; PACAP38. Ligand binding causes a conformation change that triggers signaling via guanine nucleotide-binding proteins (G proteins) and modulates the activity of downstream effectors. Activates cAMP-dependent pathway. This chain is Vasoactive intestinal polypeptide receptor 1 (VIPR1), found in Sus scrofa (Pig).